The following is a 291-amino-acid chain: Short-chain dehydrogenase/reductase GME11359 (291 aa).

NADP(+)-binding residues include L18, D67, N96, Y177, K181, and V209. The active-site Proton acceptor is Y177. The active-site Lowers pKa of active site Tyr is K181.

The protein belongs to the short-chain dehydrogenases/reductases (SDR) family.

It participates in secondary metabolite biosynthesis. Short-chain dehydrogenase/reductase; part of the gene cluster that mediates the biosynthesis of dibenzodioxocinones such as pestalotiollide B, a novel class of inhibitors against cholesterol ester transfer protein (CEPT). The biosynthesis initiates from condensation of acetate and malonate units catalyzed by the non-reducing PKS pks8/GME11356. Pks8/GME11356 lacks a thioesterase (TE) domain, which is important to the cyclizing of the third ring of atrochrysone carboxylic acid, and the esterase GME11355 might play the role of TE and catalyzes the cyclization reaction of the C ring. The lactamase-like protein GME11357 (or other beta-lactamases in Pestalotiopsis microspora) probably hydrolyzes the thioester bond between the ACP of pks8/GME11356 and the intermediate to release atrochrysone carboxylic acid, which is spontaneously dehydrates to form endocrocin anthrone. Endocrocin anthrone is further converted to emodin via the endocrocin intermediate. Emodin is then oxidized by several enzymes such as the Baeyer-Villiger oxidase GME11358, the oxidoreductase GME11367, the short chain dehydrogenase/reductase GME11373, as well as by other oxidoreductases from the cluster, to modify the A and C rings and open the B ring, and finally yield monodictyphenone. The prenyltransferase GME11375 may catalyze the addition reaction between the C5 side chains and the carbon bone of dibenzodioxocinones. The remaining biochemical reactions to the final product dibenzodioxocinones should be methylation catalyzed by methyltransferase GME11366 and reduction and lactonization reaction catalyzed by a series of oxidordeuctases. The sequence is that of Short-chain dehydrogenase/reductase GME11359 from Pestalotiopsis microspora.